The following is a 382-amino-acid chain: Membrane protein MLC1 (382 aa).

The segment covering Met-1–Arg-28 has biased composition (basic and acidic residues). The interval Met-1 to Leu-43 is disordered. The next 4 helical transmembrane spans lie at Trp-58–Leu-78, Tyr-88–Gly-107, Phe-117–Cys-137, and Ile-148–Ile-168. Residues Ser-183, Ser-185, and Ser-188 each carry the phosphoserine modification. 4 helical membrane-spanning segments follow: residues Ser-205–Val-225, Leu-234–Val-254, Leu-263–Gly-283, and Leu-309–Ile-329.

Interacts with ATP1B1. Part of a complex containing ATP1B1, TRPV4, AQP4 and HEPACAM.

The protein localises to the membrane. The protein resides in the cell membrane. It is found in the cytoplasm. Its subcellular location is the perinuclear region. It localises to the endoplasmic reticulum. Functionally, transmembrane protein mainly expressed in brain astrocytes that may play a role in transport across the blood-brain and brain-cerebrospinal fluid barriers. Regulates the response of astrocytes to hypo-osmosis by promoting calcium influx. May function as regulatory protein of membrane protein complexes such as ion channels. This chain is Membrane protein MLC1, found in Mus musculus (Mouse).